Consider the following 462-residue polypeptide: Phospho-2-dehydro-3-deoxyheptonate aldolase AroG (462 aa).

Cysteine 87 lines the Mn(2+) pocket. Phosphoenolpyruvate-binding positions include arginine 126, 283-284 (ER), lysine 306, and arginine 337. Residues histidine 369, glutamate 411, and aspartate 441 each contribute to the Mn(2+) site.

Homodimer. Interacts with Rv0948c. The cofactor is Mn(2+). Co(2+) is required as a cofactor. Requires Cd(2+) as cofactor.

It carries out the reaction D-erythrose 4-phosphate + phosphoenolpyruvate + H2O = 7-phospho-2-dehydro-3-deoxy-D-arabino-heptonate + phosphate. The protein operates within metabolic intermediate biosynthesis; chorismate biosynthesis; chorismate from D-erythrose 4-phosphate and phosphoenolpyruvate: step 1/7. Its activity is regulated as follows. Feedback inhibited by tryptophan, tyrosine, phenylalanine and chorismate. Its function is as follows. Catalyzes an aldol-like condensation reaction between phosphoenolpyruvate (PEP) and D-erythrose 4-phosphate (E4P) to generate 3-deoxy-D-arabino-heptulosonate 7-phosphate (DAH7P) and inorganic phosphate. The protein is Phospho-2-dehydro-3-deoxyheptonate aldolase AroG (aroG) of Mycobacterium tuberculosis (strain ATCC 25618 / H37Rv).